A 250-amino-acid chain; its full sequence is Probable transcriptional regulatory protein Cphamn1_0542 (250 aa).

It belongs to the TACO1 family.

The protein localises to the cytoplasm. This Chlorobium phaeobacteroides (strain BS1) protein is Probable transcriptional regulatory protein Cphamn1_0542.